We begin with the raw amino-acid sequence, 565 residues long: Protein nucleotidyltransferase YdiU (565 aa).

Residues Gly118, Gly120, Arg121, Lys141, Asp153, Gly154, Arg211, and Arg218 each coordinate ATP. Asp290 functions as the Proton acceptor in the catalytic mechanism. Mg(2+)-binding residues include Asn291 and Asp300. Asp300 contributes to the ATP binding site.

The protein belongs to the SELO family. It depends on Mg(2+) as a cofactor. Mn(2+) is required as a cofactor.

It carries out the reaction L-seryl-[protein] + ATP = 3-O-(5'-adenylyl)-L-seryl-[protein] + diphosphate. It catalyses the reaction L-threonyl-[protein] + ATP = 3-O-(5'-adenylyl)-L-threonyl-[protein] + diphosphate. The catalysed reaction is L-tyrosyl-[protein] + ATP = O-(5'-adenylyl)-L-tyrosyl-[protein] + diphosphate. The enzyme catalyses L-histidyl-[protein] + UTP = N(tele)-(5'-uridylyl)-L-histidyl-[protein] + diphosphate. It carries out the reaction L-seryl-[protein] + UTP = O-(5'-uridylyl)-L-seryl-[protein] + diphosphate. It catalyses the reaction L-tyrosyl-[protein] + UTP = O-(5'-uridylyl)-L-tyrosyl-[protein] + diphosphate. Nucleotidyltransferase involved in the post-translational modification of proteins. It can catalyze the addition of adenosine monophosphate (AMP) or uridine monophosphate (UMP) to a protein, resulting in modifications known as AMPylation and UMPylation. The sequence is that of Protein nucleotidyltransferase YdiU from Nitrosospira multiformis (strain ATCC 25196 / NCIMB 11849 / C 71).